The primary structure comprises 481 residues: Exodeoxyribonuclease I (481 aa).

The 182-residue stretch at 12-193 (LFYDYETFGK…SSDVYATMNI (182 aa)) folds into the Exonuclease domain. Asp-15, Glu-17, and Asp-186 together coordinate Mg(2+). Glu-17 is a binding site for substrate. The 149-residue stretch at 202 to 350 (PKLFNFFFKY…KLKKFLCSIA (149 aa)) folds into the ExoI SH3-like domain. The ExoI C-terminal domain maps to 356–471 (NGSNVDLKMY…ELFEYVKYTR (116 aa)).

As to quaternary structure, monomer. Interacts with ssb (via C-terminus); this interaction stimulates the exonuclease activity by recruiting the enzyme to its substrate. Mg(2+) serves as cofactor.

It carries out the reaction Exonucleolytic cleavage in the 3'- to 5'-direction to yield nucleoside 5'-phosphates.. Degrades single-stranded DNA (ssDNA) in a highly processive manner. Also functions as a DNA deoxyribophosphodiesterase that releases deoxyribose-phosphate moieties following the cleavage of DNA at an apurinic/apyrimidinic (AP) site by either an AP endonuclease or AP lyase. In Buchnera aphidicola subsp. Baizongia pistaciae (strain Bp), this protein is Exodeoxyribonuclease I (sbcB).